Consider the following 238-residue polypeptide: uncharacterized protein (238 aa).

This is an uncharacterized protein from Haemophilus influenzae (strain ATCC 51907 / DSM 11121 / KW20 / Rd).